Here is a 380-residue protein sequence, read N- to C-terminus: GATOR1 complex protein NPRL2 (380 aa).

The tract at residues 1-133 is interaction with PDPK1; it reads MGSSCRIECI…SKQKLVPIMT (133 aa). Arginine 78 contributes to the GDP binding site. The residue at position 78 (arginine 78) is an Asymmetric dimethylarginine. Residues lysine 158 and lysine 357 each participate in a glycyl lysine isopeptide (Lys-Gly) (interchain with G-Cter in ubiquitin) cross-link.

This sequence belongs to the NPR2 family. Within the GATOR complex, component of the GATOR1 subcomplex, made of DEPDC5, NPRL2 and NPRL3. GATOR1 mediates the strong interaction of the GATOR complex with small GTPases Rag (RagA/RRAGA, RagB/RRAGB, RagC/RRAGC and/or RagD/RRAGD) heterodimers. GATOR1 interacts with GPR155/LYCHOS; interaction takes place in presence of cholesterol and prevents interaction between GATOR1 and KICSTOR. Interacts with PDPK1. Post-translationally, in the presence of abundant amino acids, ubiquitinated at Lys-158 and Lys-357 via 'Lys-6'-linked ubiquitination by the WDR24 component of the GATOR2 complex, thereby inhibiting the GATOR1 complex and promoting mTORC1 activation. In terms of processing, asymmetric dimethylation at Arg-78 by PRMT1 inhibits the GTPase activator activity of the GATOR1 complex and consequently inducing timely mTORC1 activation under methionine-sufficient conditions.

It is found in the lysosome membrane. Catalytic component of the GATOR1 complex, a multiprotein complex that functions as an inhibitor of the amino acid-sensing branch of the mTORC1 pathway. In response to amino acid depletion, the GATOR1 complex has GTPase activating protein (GAP) activity and strongly increases GTP hydrolysis by RagA/RRAGA (or RagB/RRAGB) within heterodimeric Rag complexes, thereby turning them into their inactive GDP-bound form, releasing mTORC1 from lysosomal surface and inhibiting mTORC1 signaling. In the presence of abundant amino acids, the GATOR1 complex is ubiquitinated and inhibited by GATOR2. Within the GATOR1 complex, NPRL2 constitutes the catalytic subunit that mediates the GTPase activator activity and under methionine-sufficient conditions, the GTPase activator activity is inhibited by PRMT1 through methylation and consequently inducing timely mTORC1 activation. In terms of biological role, suppresses Src-dependent tyrosine phosphorylation and activation of PDPK1 and its downstream signaling. Down-regulates PDPK1 kinase activity by interfering with tyrosine phosphorylation at 'Tyr-9', 'Tyr-373' and 'Tyr-376' residues. May act as a tumor suppressor. Suppresses cell growth and enhances sensitivity to various anticancer drugs. This is GATOR1 complex protein NPRL2 from Bos taurus (Bovine).